We begin with the raw amino-acid sequence, 325 residues long: Adenine deaminase (325 aa).

Residues histidine 11, histidine 13, and histidine 189 each contribute to the Zn(2+) site. Glutamate 192 serves as the catalytic Proton donor. Aspartate 270 contacts Zn(2+). Position 271 (aspartate 271) interacts with substrate.

The protein belongs to the metallo-dependent hydrolases superfamily. Adenosine and AMP deaminases family. Adenine deaminase type 2 subfamily. Zn(2+) is required as a cofactor.

It carries out the reaction adenine + H2O + H(+) = hypoxanthine + NH4(+). In terms of biological role, catalyzes the hydrolytic deamination of adenine to hypoxanthine. Plays an important role in the purine salvage pathway and in nitrogen catabolism. This chain is Adenine deaminase, found in Agrobacterium fabrum (strain C58 / ATCC 33970) (Agrobacterium tumefaciens (strain C58)).